A 734-amino-acid chain; its full sequence is Sulfate transporter (734 aa).

The span at 1–18 shows a compositional bias: basic and acidic residues; that stretch reads MSLKNEDQNDLSPKDSVK. The tract at residues 1–38 is disordered; that stretch reads MSLKNEDQNDLSPKDSVKGNDQYRAPSGIHLEPEEESR. 2 positions are modified to phosphoserine: S12 and S16. Transmembrane regions (helical) follow at residues 113–133 and 138–158; these read VMSG…YSLL and PIYG…LGTS. N-linked (GlcNAc...) asparagine glycosylation is present at N194. 6 helical membrane-spanning segments follow: residues 214–234, 237–257, 379–399, 415–435, 453–473, and 519–539; these read IIVG…MGFF, GFVS…GASF, VDAI…SEMF, AIGF…SAAL, VMTA…FFSL, and LIST…CVIL. The region spanning 563 to 714 is the STAS domain; sequence AYKNLQAKSG…YSIYEAMTFA (152 aa).

Belongs to the SLC26A/SulP transporter (TC 2.A.53) family. Post-translationally, N-glycosylated.

Its subcellular location is the cell membrane. It localises to the apical cell membrane. The enzyme catalyses oxalate(in) + sulfate(out) = oxalate(out) + sulfate(in). The catalysed reaction is sulfate(out) + 2 chloride(in) = sulfate(in) + 2 chloride(out). It catalyses the reaction oxalate(out) + 2 chloride(in) = oxalate(in) + 2 chloride(out). It carries out the reaction bromide(in) + chloride(out) = bromide(out) + chloride(in). The enzyme catalyses nitrate(in) + chloride(out) = nitrate(out) + chloride(in). The catalysed reaction is iodide(in) + chloride(out) = iodide(out) + chloride(in). Its function is as follows. Sulfate transporter which mediates sulfate uptake into chondrocytes in order to maintain adequate sulfation of proteoglycans which is needed for cartilage development. Mediates electroneutral anion exchange of sulfate ions for oxalate ions, sulfate and oxalate ions for chloride and/or hydroxyl ions and chloride ions for bromide, iodide and nitrate ions. The coupling of sulfate transport to both hydroxyl and chloride ions likely serves to ensure transport at both acidic pH when most sulfate uptake is mediated by sulfate-hydroxide exchange and alkaline pH when most sulfate uptake is mediated by sulfate-chloride exchange. Essential for chondrocyte proliferation, differentiation and cell size expansion. The polypeptide is Sulfate transporter (SLC26A2) (Bos taurus (Bovine)).